A 103-amino-acid chain; its full sequence is Cyclotide vibi-I (103 aa).

The first 9 residues, 1–9, serve as a signal peptide directing secretion; it reads AAFALPAFA. Positions 10-69 are excised as a propeptide; the sequence is SFEKDVITPAALEAVLNRKAPLSNIMMENDAILNVIANVKTVISNPVLEEALLKTNHGVN. Positions 70 to 99 form a cross-link, cyclopeptide (Gly-Asn); the sequence is GIPCGESCVWIPCLTSTVGCSCKSKVCYRN. 3 cysteine pairs are disulfide-bonded: Cys-73/Cys-89, Cys-77/Cys-91, and Cys-82/Cys-96. The propeptide occupies 100–103; sequence SLDN.

This is a cyclic peptide.

In terms of biological role, probably participates in a plant defense mechanism. This chain is Cyclotide vibi-I, found in Viola biflora (Yellow wood violet).